The sequence spans 277 residues: MIRVPSPAKLNLFLHITGRRENGYHELQTIFQLIDLYDWMTFTPISEDEIQIEGLGEVQLEQNLIYRAAQILRPHAQNPCGLHIKIEKNIPMGAGLGGGSSNAATTLIVLNQLWQCGLTEEQLAQFGVKLGADVPIFIYGLNAWAEGIGEHLSFIDLDQKQFIVLKPDCFISTQLLFSQKTLTRDSKPTTFCAYQLEPSNFGNNFEPLARELYPEVEEAMQYLDQFGHAKLTGTGACVFAEVTDEMNVDDILKHAPCKAYLVHSLKESPLRHFKVAS.

The active site involves K9. P91–S101 serves as a coordination point for ATP. D133 is an active-site residue.

This sequence belongs to the GHMP kinase family. IspE subfamily.

It catalyses the reaction 4-CDP-2-C-methyl-D-erythritol + ATP = 4-CDP-2-C-methyl-D-erythritol 2-phosphate + ADP + H(+). The protein operates within isoprenoid biosynthesis; isopentenyl diphosphate biosynthesis via DXP pathway; isopentenyl diphosphate from 1-deoxy-D-xylulose 5-phosphate: step 3/6. In terms of biological role, catalyzes the phosphorylation of the position 2 hydroxy group of 4-diphosphocytidyl-2C-methyl-D-erythritol. In Acinetobacter baumannii (strain AB307-0294), this protein is 4-diphosphocytidyl-2-C-methyl-D-erythritol kinase.